Reading from the N-terminus, the 556-residue chain is Formate--tetrahydrofolate ligase (556 aa).

ATP is bound at residue 65–72 (TPAGEGKT).

The protein belongs to the formate--tetrahydrofolate ligase family.

It carries out the reaction (6S)-5,6,7,8-tetrahydrofolate + formate + ATP = (6R)-10-formyltetrahydrofolate + ADP + phosphate. It functions in the pathway one-carbon metabolism; tetrahydrofolate interconversion. The sequence is that of Formate--tetrahydrofolate ligase from Maricaulis maris (strain MCS10) (Caulobacter maris).